Reading from the N-terminus, the 834-residue chain is DNA-directed RNA polymerase subunit beta' (834 aa).

A compositionally biased stretch (polar residues) spans 1 to 22; that stretch reads MTYSNKPTGSSLRSSRNSTLEP. The interval 1–45 is disordered; sequence MTYSNKPTGSSLRSSRNSTLEPQSLVHREESKRQEGPKGQNLRIG. The span at 26–36 shows a compositional bias: basic and acidic residues; that stretch reads VHREESKRQEG. 4 residues coordinate Zn(2+): C101, C103, C118, and C121. D606, D608, and D610 together coordinate Mg(2+).

The protein belongs to the RNA polymerase beta' chain family. RpoC1 subfamily. In plastids the minimal PEP RNA polymerase catalytic core is composed of four subunits: alpha, beta, beta', and beta''. When a (nuclear-encoded) sigma factor is associated with the core the holoenzyme is formed, which can initiate transcription. Mg(2+) serves as cofactor. Zn(2+) is required as a cofactor.

It is found in the plastid. The protein resides in the chloroplast. It catalyses the reaction RNA(n) + a ribonucleoside 5'-triphosphate = RNA(n+1) + diphosphate. Functionally, DNA-dependent RNA polymerase catalyzes the transcription of DNA into RNA using the four ribonucleoside triphosphates as substrates. This chain is DNA-directed RNA polymerase subunit beta', found in Staurastrum punctulatum (Green alga).